The sequence spans 449 residues: UDP-N-acetylmuramoylalanine--D-glutamate ligase (449 aa).

118–124 (GTNGKTT) lines the ATP pocket.

The protein belongs to the MurCDEF family.

The protein localises to the cytoplasm. It catalyses the reaction UDP-N-acetyl-alpha-D-muramoyl-L-alanine + D-glutamate + ATP = UDP-N-acetyl-alpha-D-muramoyl-L-alanyl-D-glutamate + ADP + phosphate + H(+). The protein operates within cell wall biogenesis; peptidoglycan biosynthesis. Functionally, cell wall formation. Catalyzes the addition of glutamate to the nucleotide precursor UDP-N-acetylmuramoyl-L-alanine (UMA). The sequence is that of UDP-N-acetylmuramoylalanine--D-glutamate ligase from Staphylococcus haemolyticus (strain JCSC1435).